The following is a 171-amino-acid chain: Flavodoxin (171 aa).

In terms of domain architecture, Flavodoxin-like spans 4–166; sequence IGLFVGTTTG…RIKEWVKQLK (163 aa).

Belongs to the flavodoxin family. It depends on FMN as a cofactor.

In terms of biological role, low-potential electron donor to a number of redox enzymes. The sequence is that of Flavodoxin (fld) from Trichodesmium erythraeum (strain IMS101).